Reading from the N-terminus, the 321-residue chain is Peroxidase 4 (321 aa).

The first 25 residues, 1 to 25, serve as a signal peptide directing secretion; that stretch reads MASSSFSIVVVALGVLALFAGSSSA. Glutamine 26 bears the Pyrrolidone carboxylic acid mark. 4 disulfide bridges follow: cysteine 36/cysteine 116, cysteine 69/cysteine 74, cysteine 122/cysteine 317, and cysteine 201/cysteine 226. The active-site Proton acceptor is histidine 67. 5 residues coordinate Ca(2+): aspartate 68, valine 71, glycine 73, aspartate 75, and serine 77. Residue proline 164 participates in substrate binding. Position 194 (histidine 194) interacts with heme b. Residue threonine 195 coordinates Ca(2+). Asparagine 210 is a glycosylation site (N-linked (GlcNAc...) asparagine). Residues aspartate 241, threonine 244, and aspartate 249 each contribute to the Ca(2+) site.

This sequence belongs to the peroxidase family. Classical plant (class III) peroxidase subfamily. Heme b serves as cofactor. Requires Ca(2+) as cofactor.

Its subcellular location is the secreted. It catalyses the reaction 2 a phenolic donor + H2O2 = 2 a phenolic radical donor + 2 H2O. Functionally, removal of H(2)O(2), oxidation of toxic reductants, biosynthesis and degradation of lignin, suberization, auxin catabolism, response to environmental stresses such as wounding, pathogen attack and oxidative stress. These functions might be dependent on each isozyme/isoform in each plant tissue. This is Peroxidase 4 from Vitis vinifera (Grape).